A 542-amino-acid chain; its full sequence is Glutamyl-tRNA(Gln) amidotransferase subunit A, mitochondrial (542 aa).

Catalysis depends on charge relay system residues lysine 55 and serine 143. Serine 167 acts as the Acyl-ester intermediate in catalysis.

The protein belongs to the amidase family. GatA subfamily. Subunit of the heterotrimeric GatCAB amidotransferase (AdT) complex, composed of A, B and C subunits.

It is found in the mitochondrion. The catalysed reaction is L-glutamyl-tRNA(Gln) + L-glutamine + ATP + H2O = L-glutaminyl-tRNA(Gln) + L-glutamate + ADP + phosphate + H(+). Its function is as follows. Allows the formation of correctly charged Gln-tRNA(Gln) through the transamidation of misacylated Glu-tRNA(Gln) in the mitochondria. The reaction takes place in the presence of glutamine and ATP through an activated gamma-phospho-Glu-tRNA(Gln). This is Glutamyl-tRNA(Gln) amidotransferase subunit A, mitochondrial from Neurospora crassa (strain ATCC 24698 / 74-OR23-1A / CBS 708.71 / DSM 1257 / FGSC 987).